The following is a 231-amino-acid chain: tRNA (guanine-N(1)-)-methyltransferase (231 aa).

S-adenosyl-L-methionine is bound by residues G112 and 132–137 (LGDFVL).

It belongs to the RNA methyltransferase TrmD family. As to quaternary structure, homodimer.

Its subcellular location is the cytoplasm. The enzyme catalyses guanosine(37) in tRNA + S-adenosyl-L-methionine = N(1)-methylguanosine(37) in tRNA + S-adenosyl-L-homocysteine + H(+). Functionally, specifically methylates guanosine-37 in various tRNAs. This Gloeothece citriformis (strain PCC 7424) (Cyanothece sp. (strain PCC 7424)) protein is tRNA (guanine-N(1)-)-methyltransferase.